A 267-amino-acid chain; its full sequence is GTP cyclohydrolase FolE2 (267 aa).

This sequence belongs to the GTP cyclohydrolase IV family.

The enzyme catalyses GTP + H2O = 7,8-dihydroneopterin 3'-triphosphate + formate + H(+). It participates in cofactor biosynthesis; 7,8-dihydroneopterin triphosphate biosynthesis; 7,8-dihydroneopterin triphosphate from GTP: step 1/1. Its function is as follows. Converts GTP to 7,8-dihydroneopterin triphosphate. The chain is GTP cyclohydrolase FolE2 from Citrifermentans bemidjiense (strain ATCC BAA-1014 / DSM 16622 / JCM 12645 / Bem) (Geobacter bemidjiensis).